Reading from the N-terminus, the 325-residue chain is Aspartate carbamoyltransferase catalytic subunit (325 aa).

Carbamoyl phosphate is bound by residues Arg-64 and Thr-65. Residue Lys-92 coordinates L-aspartate. 3 residues coordinate carbamoyl phosphate: Arg-114, His-142, and Gln-145. Arg-176 and Arg-230 together coordinate L-aspartate. Gly-271 and Pro-272 together coordinate carbamoyl phosphate.

Belongs to the aspartate/ornithine carbamoyltransferase superfamily. ATCase family. In terms of assembly, heterododecamer (2C3:3R2) of six catalytic PyrB chains organized as two trimers (C3), and six regulatory PyrI chains organized as three dimers (R2).

It catalyses the reaction carbamoyl phosphate + L-aspartate = N-carbamoyl-L-aspartate + phosphate + H(+). It functions in the pathway pyrimidine metabolism; UMP biosynthesis via de novo pathway; (S)-dihydroorotate from bicarbonate: step 2/3. Its function is as follows. Catalyzes the condensation of carbamoyl phosphate and aspartate to form carbamoyl aspartate and inorganic phosphate, the committed step in the de novo pyrimidine nucleotide biosynthesis pathway. This Nitratidesulfovibrio vulgaris (strain DSM 19637 / Miyazaki F) (Desulfovibrio vulgaris) protein is Aspartate carbamoyltransferase catalytic subunit.